Here is a 183-residue protein sequence, read N- to C-terminus: MMSKQLAAQVPAEPVVLGKMGSSYGIRGWLRVFSSTEDAESIFDYLPWFIQKAGQWQQVQLESWKHHNQDLIIKLKGVDDRDAANLLTNCEIVVDSSQLPALEEGDYYWKDLMGCQVVTAEGYDLGKVIDMMETGSNDVLVIKANLKDAFGIKERLVPFLDGQVIKKVDLATRTIEVDWDPGF.

The PRC barrel domain maps to 104-183 (EGDYYWKDLM…TIEVDWDPGF (80 aa)).

It belongs to the RimM family. In terms of assembly, binds ribosomal protein uS19.

It is found in the cytoplasm. An accessory protein needed during the final step in the assembly of 30S ribosomal subunit, possibly for assembly of the head region. Essential for efficient processing of 16S rRNA. May be needed both before and after RbfA during the maturation of 16S rRNA. It has affinity for free ribosomal 30S subunits but not for 70S ribosomes. The chain is Ribosome maturation factor RimM from Salmonella choleraesuis (strain SC-B67).